Consider the following 122-residue polypeptide: MRHYEIVFIVHPDQSEQVPAMIERYKSTVTSQGGQVHRVEDWGRRQLAYMIQKLAKAHYVCVNIECGKETLAELEHAFKFNDAVLRHLIVQTKKAETAPSPMMKEVQREEAKKAAAQSEQAA.

A disordered region spans residues 95–122 (AETAPSPMMKEVQREEAKKAAAQSEQAA).

Belongs to the bacterial ribosomal protein bS6 family.

Binds together with bS18 to 16S ribosomal RNA. In Ralstonia nicotianae (strain ATCC BAA-1114 / GMI1000) (Ralstonia solanacearum), this protein is Small ribosomal subunit protein bS6.